Reading from the N-terminus, the 538-residue chain is Chaperonin GroEL 1 (538 aa).

ATP contacts are provided by residues 29 to 32 (TLGP), 86 to 90 (DGTTT), G413, 478 to 480 (NAA), and D494.

The protein belongs to the chaperonin (HSP60) family. As to quaternary structure, forms a cylinder of 14 subunits composed of two heptameric rings stacked back-to-back. Interacts with the co-chaperonin GroES.

Its subcellular location is the cytoplasm. The enzyme catalyses ATP + H2O + a folded polypeptide = ADP + phosphate + an unfolded polypeptide.. Its function is as follows. Together with its co-chaperonin GroES, plays an essential role in assisting protein folding. The GroEL-GroES system forms a nano-cage that allows encapsulation of the non-native substrate proteins and provides a physical environment optimized to promote and accelerate protein folding. The polypeptide is Chaperonin GroEL 1 (Corynebacterium glutamicum (strain R)).